A 443-amino-acid chain; its full sequence is 23S rRNA (uracil(1939)-C(5))-methyltransferase RlmD (443 aa).

Residues 4 to 66 (QNRFDRTSFQ…RHFDEARVVE (63 aa)) form the TRAM domain. The [4Fe-4S] cluster site is built by cysteine 79, cysteine 85, cysteine 88, and cysteine 167. S-adenosyl-L-methionine is bound by residues glutamine 275, phenylalanine 304, asparagine 309, glutamate 325, aspartate 352, and aspartate 373. Cysteine 399 acts as the Nucleophile in catalysis.

The protein belongs to the class I-like SAM-binding methyltransferase superfamily. RNA M5U methyltransferase family. RlmD subfamily.

It catalyses the reaction uridine(1939) in 23S rRNA + S-adenosyl-L-methionine = 5-methyluridine(1939) in 23S rRNA + S-adenosyl-L-homocysteine + H(+). Its function is as follows. Catalyzes the formation of 5-methyl-uridine at position 1939 (m5U1939) in 23S rRNA. This is 23S rRNA (uracil(1939)-C(5))-methyltransferase RlmD from Xylella fastidiosa (strain 9a5c).